Consider the following 205-residue polypeptide: GTP cyclohydrolase-2 (205 aa).

49–53 (RLHSE) lines the GTP pocket. Positions 54, 65, and 67 each coordinate Zn(2+). GTP is bound by residues Q70, 92–94 (EGR), and T114. The active-site Proton acceptor is D126. The active-site Nucleophile is R128. Residues T149 and K154 each coordinate GTP.

The protein belongs to the GTP cyclohydrolase II family. Requires Zn(2+) as cofactor.

The enzyme catalyses GTP + 4 H2O = 2,5-diamino-6-hydroxy-4-(5-phosphoribosylamino)-pyrimidine + formate + 2 phosphate + 3 H(+). Its pathway is cofactor biosynthesis; riboflavin biosynthesis; 5-amino-6-(D-ribitylamino)uracil from GTP: step 1/4. Catalyzes the conversion of GTP to 2,5-diamino-6-ribosylamino-4(3H)-pyrimidinone 5'-phosphate (DARP), formate and pyrophosphate. The chain is GTP cyclohydrolase-2 from Pseudomonas putida (strain ATCC 700007 / DSM 6899 / JCM 31910 / BCRC 17059 / LMG 24140 / F1).